A 220-amino-acid chain; its full sequence is Deoxyribose-phosphate aldolase 1 (220 aa).

Catalysis depends on Asp-89, which acts as the Proton donor/acceptor. The active-site Schiff-base intermediate with acetaldehyde is Lys-151. Lys-180 functions as the Proton donor/acceptor in the catalytic mechanism.

It belongs to the DeoC/FbaB aldolase family. DeoC type 1 subfamily.

Its subcellular location is the cytoplasm. The enzyme catalyses 2-deoxy-D-ribose 5-phosphate = D-glyceraldehyde 3-phosphate + acetaldehyde. Its pathway is carbohydrate degradation; 2-deoxy-D-ribose 1-phosphate degradation; D-glyceraldehyde 3-phosphate and acetaldehyde from 2-deoxy-alpha-D-ribose 1-phosphate: step 2/2. Catalyzes a reversible aldol reaction between acetaldehyde and D-glyceraldehyde 3-phosphate to generate 2-deoxy-D-ribose 5-phosphate. This Mesoplasma florum (strain ATCC 33453 / NBRC 100688 / NCTC 11704 / L1) (Acholeplasma florum) protein is Deoxyribose-phosphate aldolase 1.